The primary structure comprises 457 residues: Ribosome biogenesis protein YTM1 (457 aa).

The tract at residues 8-89 (VKVKFFTREK…ETTLTVEYTR (82 aa)) is ubiquitin-like (UBL) domain. The interval 99–457 (NFNNDDWVSA…INKGDNIFKN (359 aa)) is sufficient for interaction with ERB1 and association with 66S pre-ribosomes. WD repeat units follow at residues 101–140 (NNDD…EKQY), 142–180 (GHTG…GSVS), 203–241 (GHKA…MTAI), 282–322 (SHTG…CIDT), 324–363 (TTSY…SAKI), 370–410 (GHKN…PMYT), and 421–457 (GVND…IFKN). A disordered region spans residues 172–191 (TKNDDGSVSNNTGDENDEEN).

Belongs to the WD repeat WDR12/YTM1 family. In terms of assembly, component of the NOP7 complex, composed of ERB1, NOP7 and YTM1. The complex is held together by ERB1, which interacts with NOP7 via its N-terminal domain and with YTM1 via a high-affinity interaction between the seven-bladed beta-propeller domains of the 2 proteins. The NOP7 complex associates with the 66S pre-ribosome. Interacts (via UBL domain) with MDN1 (via VWFA/MIDAS domain).

The protein resides in the nucleus. The protein localises to the nucleolus. Its subcellular location is the nucleoplasm. Component of the NOP7 complex, which is required for maturation of the 25S and 5.8S ribosomal RNAs and formation of the 60S ribosome. This is Ribosome biogenesis protein YTM1 from Candida glabrata (strain ATCC 2001 / BCRC 20586 / JCM 3761 / NBRC 0622 / NRRL Y-65 / CBS 138) (Yeast).